Consider the following 295-residue polypeptide: Alpha-soluble NSF attachment protein (295 aa).

Residue M1 is modified to N-acetylmethionine. Phosphoserine is present on residues S26, S29, and S195.

This sequence belongs to the SNAP family. Interacts with PRKCABP, and disrupts the interaction between GRIA2 and PRKCABP, leading to the internalization of GRIA2. Found in a complex with VAMP8. Component of a SNARE-like complex that contains at least ZW10, USE1L, RINT1, STX18 and NAPA/SNAP-alpha. Interacts with VTI1A. Interacts with STX12. Interacts with GNA12 (via N-terminus); the interaction promotes CDH5 localization to plasma membrane.

It localises to the cell membrane. Required for vesicular transport between the endoplasmic reticulum and the Golgi apparatus. Together with GNA12 promotes CDH5 localization to plasma membrane. In Mus musculus (Mouse), this protein is Alpha-soluble NSF attachment protein (Napa).